Consider the following 146-residue polypeptide: DNA-directed RNA polymerases II, IV and V subunit 8B (146 aa).

It belongs to the eukaryotic RPB8 RNA polymerase subunit family. As to quaternary structure, component of the RNA polymerase II, IV and V complexes. Associates with the mediator complex.

Its subcellular location is the nucleus. In terms of biological role, DNA-dependent RNA polymerase catalyzes the transcription of DNA into RNA using the four ribonucleoside triphosphates as substrates. Component of RNA polymerase II which synthesizes mRNA precursors and many functional non-coding RNAs. Pol II is the central component of the basal RNA polymerase II transcription machinery. It is composed of mobile elements that move relative to each other. Component of RNA polymerases IV and V which mediate short-interfering RNAs (siRNA) accumulation and subsequent RNA-directed DNA methylation-dependent (RdDM) transcriptional gene silencing (TGS) of endogenous repeated sequences, including transposable elements. This is DNA-directed RNA polymerases II, IV and V subunit 8B (NRPB8B) from Arabidopsis thaliana (Mouse-ear cress).